Consider the following 958-residue polypeptide: N-terminal acetyltransferase B complex subunit NAA25 homolog (958 aa).

TPR repeat units follow at residues 7–42, 78–111, and 320–353; these read AVLE…HPNT, ELTL…DPSE, and FFAY…MLEY.

Belongs to the MDM20/NAA25 family. As to quaternary structure, component of the N-terminal acetyltransferase B (NatB) complex. Interacts with acer-1. As to expression, expressed in germline and somatic cells.

The protein localises to the cytoplasm. The protein resides in the nucleus. It is found in the chromosome. In terms of biological role, non-catalytic subunit of the NatB complex which catalyzes acetylation of the N-terminal methionine residues of proteins beginning with Met-Asp or Met-Glu. Required for chromosome organization and arrangement; specifically for assembly of the central region components of the synaptonemal complex onto chromosomes during meiosis and for DNA double stranded break formation and repair. Acts downstream of xnd-1 to regulate levels of histone acetylation in germ and somatic cell nuclei by controlling acetyl-CoA production through antagonizing the acetyl-CoA hydrolase activity of acer-1. This is N-terminal acetyltransferase B complex subunit NAA25 homolog from Caenorhabditis elegans.